Reading from the N-terminus, the 314-residue chain is Oxidoreductase NAD-binding domain-containing protein 1 (314 aa).

The signal sequence occupies residues 1–18 (MALVAGSAAYQVLRGVTG). The region spanning 63 to 166 (EIISPAKVCG…VGGEFCFDPQ (104 aa)) is the FAD-binding FR-type domain. NAD(+) is bound at residue 180 to 185 (GVGINP).

The protein is Oxidoreductase NAD-binding domain-containing protein 1 (oxnad1) of Xenopus laevis (African clawed frog).